The chain runs to 471 residues: Glutamate--tRNA ligase (471 aa).

The 'HIGH' region motif lies at 9-19 (PSPTGYLHVGG). Positions 98, 100, 125, and 127 each coordinate Zn(2+). A 'KMSKS' region motif is present at residues 237–241 (KLSKR). ATP is bound at residue lysine 240.

This sequence belongs to the class-I aminoacyl-tRNA synthetase family. Glutamate--tRNA ligase type 1 subfamily. Monomer. The cofactor is Zn(2+).

The protein localises to the cytoplasm. The enzyme catalyses tRNA(Glu) + L-glutamate + ATP = L-glutamyl-tRNA(Glu) + AMP + diphosphate. Catalyzes the attachment of glutamate to tRNA(Glu) in a two-step reaction: glutamate is first activated by ATP to form Glu-AMP and then transferred to the acceptor end of tRNA(Glu). The sequence is that of Glutamate--tRNA ligase from Salmonella gallinarum (strain 287/91 / NCTC 13346).